The following is a 137-amino-acid chain: Golgin subfamily A member 7 (137 aa).

S-palmitoyl cysteine attachment occurs at residues C69 and C72.

This sequence belongs to the ERF4 family. Interacts with GOLGA3. Interacts with ZDHHC9. Palmitoylated on Cys-69 and Cys-72; which is required for Golgi localization and interaction with GOLGA3.

It is found in the golgi apparatus membrane. Functionally, may be involved in protein transport from Golgi to cell surface. The ZDHHC9-GOLGA7 complex is a palmitoyltransferase specific for HRAS and NRAS. This Bos taurus (Bovine) protein is Golgin subfamily A member 7 (GOLGA7).